A 218-amino-acid polypeptide reads, in one-letter code: Thiopurine S-methyltransferase (218 aa).

Tryptophan 10, leucine 45, glutamate 66, and arginine 123 together coordinate S-adenosyl-L-methionine.

This sequence belongs to the class I-like SAM-binding methyltransferase superfamily. TPMT family.

Its subcellular location is the cytoplasm. It carries out the reaction S-adenosyl-L-methionine + a thiopurine = S-adenosyl-L-homocysteine + a thiopurine S-methylether.. This chain is Thiopurine S-methyltransferase, found in Shewanella baltica (strain OS223).